Here is a 434-residue protein sequence, read N- to C-terminus: Nuclear receptor subfamily 1 group I member 2 (434 aa).

Positions 38-107 (PQICRVCGDK…RLRKCLESGM (70 aa)) form a DNA-binding region, nuclear receptor. 2 NR C4-type zinc fingers span residues 41–61 (CRVCGDKATGYHFNVMTCEGC) and 77–102 (CPFRKGACEITRKTRRQCQACRLRKC). The short motif at 66 to 92 (RRAMKRNARLRCPFRKGACEITRKTRR) is the Bipartite nuclear localization signal element. Positions 108–145 (KKEMIMSDEAVEERRALIKRKKSERTGTQPLGVQGLTE) are hinge. The NR LBD domain maps to 146–433 (EQRMMIRELM…LMQELFGITG (288 aa)). Hyperforin-binding positions include Ser247, 285–288 (QLRF), and His407.

It belongs to the nuclear hormone receptor family. NR1 subfamily. As to quaternary structure, heterodimer with RXR. Interacts with NCOA1. Interacts (via domain NR LBD) with CRY1 and CRY2 in a ligand-dependent manner. In terms of tissue distribution, expressed in liver, colon and small intestine.

The protein resides in the nucleus. Nuclear receptor that binds and is activated by variety of endogenous and xenobiotic compounds. Transcription factor that activates the transcription of multiple genes involved in the metabolism and secretion of potentially harmful xenobiotics, drugs and endogenous compounds. Activated by the antibiotic rifampicin and various plant metabolites, such as hyperforin, guggulipid, colupulone, and isoflavones. Response to specific ligands is species-specific. Activated by naturally occurring steroids, such as pregnenolone and progesterone. Binds to a response element in the promoters of the CYP3A4 and ABCB1/MDR1 genes. The sequence is that of Nuclear receptor subfamily 1 group I member 2 (NR1I2) from Homo sapiens (Human).